The chain runs to 208 residues: Large ribosomal subunit protein uL4 (208 aa).

This sequence belongs to the universal ribosomal protein uL4 family. Part of the 50S ribosomal subunit.

Functionally, one of the primary rRNA binding proteins, this protein initially binds near the 5'-end of the 23S rRNA. It is important during the early stages of 50S assembly. It makes multiple contacts with different domains of the 23S rRNA in the assembled 50S subunit and ribosome. Its function is as follows. Forms part of the polypeptide exit tunnel. This Solibacter usitatus (strain Ellin6076) protein is Large ribosomal subunit protein uL4.